Reading from the N-terminus, the 182-residue chain is Small ribosomal subunit protein uS4c (182 aa).

Residues 82 to 143 enclose the S4 RNA-binding domain; it reads MRLDNILFRL…KERSKVLIQN (62 aa).

This sequence belongs to the universal ribosomal protein uS4 family. As to quaternary structure, part of the 30S ribosomal subunit. Contacts protein S5. The interaction surface between S4 and S5 is involved in control of translational fidelity.

It localises to the plastid. The protein resides in the chloroplast. In terms of biological role, one of the primary rRNA binding proteins, it binds directly to 16S rRNA where it nucleates assembly of the body of the 30S subunit. With S5 and S12 plays an important role in translational accuracy. The polypeptide is Small ribosomal subunit protein uS4c (rps4) (Tigridia sp. (strain Lejeune 1997)).